A 380-amino-acid chain; its full sequence is Anthranilate phosphoribosyltransferase (380 aa).

Residues Gly109, Asn119, Ser121, Thr122, Lys142, Ser144, and Ser146 each coordinate 5-phospho-alpha-D-ribose 1-diphosphate. Asp258 and Glu259 together coordinate Mg(2+).

Belongs to the anthranilate phosphoribosyltransferase family. In terms of assembly, homodimer. Mg(2+) serves as cofactor.

The catalysed reaction is N-(5-phospho-beta-D-ribosyl)anthranilate + diphosphate = 5-phospho-alpha-D-ribose 1-diphosphate + anthranilate. Its pathway is amino-acid biosynthesis; L-tryptophan biosynthesis; L-tryptophan from chorismate: step 2/5. In terms of biological role, catalyzes the transfer of the phosphoribosyl group of 5-phosphorylribose-1-pyrophosphate (PRPP) to anthranilate to yield N-(5'-phosphoribosyl)-anthranilate (PRA), the second step in tryptophan biosynthesis. This is Anthranilate phosphoribosyltransferase from Saccharomyces cerevisiae (strain ATCC 204508 / S288c) (Baker's yeast).